The sequence spans 151 residues: Arginine repressor (151 aa).

This sequence belongs to the ArgR family.

The protein resides in the cytoplasm. The protein operates within amino-acid biosynthesis; L-arginine biosynthesis [regulation]. In terms of biological role, regulates arginine biosynthesis genes. The chain is Arginine repressor from Clostridium novyi (strain NT).